The following is a 263-amino-acid chain: Neurogenin-2 (263 aa).

Positions 20–76 (LGSASPASATLTPMSSSADEEEDEELRRPGSARGQRGAEAEQGVQGSPASGAGGCRP) are disordered. Positions 24 to 36 (SPASATLTPMSSS) are enriched in polar residues. One can recognise a bHLH domain in the interval 112–164 (TRRLKANNRERNRMHNLNAALDALREVLPTFPEDAKLTKIETLRFAHNYIWAL). Over residues 197-231 (LGASGDSPSPPSSWSCTNSPASSSNSTSPYSCTLS) the composition is skewed to low complexity. Positions 197–253 (LGASGDSPSPPSSWSCTNSPASSSNSTSPYSCTLSPASPGSDVDYWQPPPPEKHRYA) are disordered.

As to quaternary structure, efficient DNA binding requires dimerization with another bHLH protein.

The protein resides in the nucleus. Transcriptional regulator. Involved in neuronal differentiation. Activates transcription by binding to the E box (5'-CANNTG-3'). This Mus musculus (Mouse) protein is Neurogenin-2 (Neurog2).